The following is a 2988-amino-acid chain: NBPF family member NBPF14 (2988 aa).

A coiled-coil region spans residues 75-119 (RQFKEEKLAEQLKQAEELRQYKVLVHSQERELTQLREKLREGRDA). Disordered stretches follow at residues 161–200 (KLSP…SKVP), 451–474 (EKVQ…PEDS), and 520–566 (WEDA…EGYS). Residues 165–177 (ENDEDEDEDVQVE) are compositionally biased toward acidic residues. Olduvai domains are found at residues 165–259 (ENDE…NILP), 436–528 (ENDN…HIIP), 529–600 (ENES…VDIG), 601–692 (RHRW…PSCP), 695–750 (SREL…LDVD), 751–843 (RIKK…RSKK), 844–919 (ERRR…LDVD), 920–1012 (RIKK…RSKK), 1013–1105 (ERRR…PSCP), 1108–1163 (SREL…LDVD), 1164–1256 (RIKK…RSKK), 1257–1349 (ERRR…PSCP), 1352–1407 (SREL…LDVD), 1408–1500 (RIKK…RSKK), 1501–1593 (ERRR…PSCP), 1596–1651 (SREL…LDVD), 1652–1744 (RFKK…RSKK), 1745–1837 (ERRR…PSCP), 1840–1895 (SREL…LDVD), 1896–1988 (RIKK…RSKK), 1989–2081 (ERRR…PSCP), 2084–2139 (SREL…LDVD), 2140–2232 (RIKK…RSKK), 2233–2325 (ERRR…PSCP), 2328–2383 (SREL…LDVD), 2384–2476 (RIKK…RSKK), 2477–2569 (ERRR…PSCP), 2572–2627 (SREL…LDVD), 2628–2720 (RIKK…RSKK), 2721–2813 (ERRR…PSCP), 2816–2889 (SREL…RSKK), and 2890–2988 (ERRR…IFPQ). Positions 190 to 200 (EVQKAEESKVP) are enriched in basic and acidic residues. Composition is skewed to acidic residues over residues 530-539 (NESDDEEEEE) and 550-562 (ESEE…ESWD). Disordered regions lie at residues 754-773 (KDEE…SREL), 828-871 (EKKG…LDEK), and 999-1038 (KGKG…ELLD). Composition is skewed to basic residues over residues 831-849 (GKGK…RRGR) and 1000-1018 (GKGK…RRGR). The interval 1243 to 1282 (KGKGKKRRGRRSKKERRRGRKEGEEDQNPPCPRLSRELLD) is disordered. Positions 1244 to 1262 (GKGKKRRGRRSKKERRRGR) are enriched in basic residues. The segment at 1487–1521 (KGKGKKRRGRRSKKERRRGRKEGEEDQNPPCPRLS) is disordered. Basic residues predominate over residues 1488–1506 (GKGKKRRGRRSKKERRRGR). The tract at residues 1731-1770 (KGKGKKRRGRRSKKERRRGRKEGEEDQNPPCPRLSRELLD) is disordered. Basic residues predominate over residues 1732-1750 (GKGKKRRGRRSKKERRRGR). Residues 1975–2014 (KGKGKKRRGRRSKKERRRGRKEGEEDQNPPCPRLSRELLD) are disordered. Basic residues predominate over residues 1976–1994 (GKGKKRRGRRSKKERRRGR). The segment at 2219 to 2258 (KGKGKKRRGRRSKKERRRGRKEGEEDQNPPCPRLSRELLD) is disordered. Residues 2220–2238 (GKGKKRRGRRSKKERRRGR) are compositionally biased toward basic residues. Positions 2463-2502 (KGKGKKRRGRRSKKERRRGRKEGEEDQNPPCPRLSRELLD) are disordered. Positions 2464 to 2482 (GKGKKRRGRRSKKERRRGR) are enriched in basic residues. Disordered regions lie at residues 2707 to 2745 (KGKG…RELL) and 2877 to 2909 (GKGK…CPRL). Basic residues-rich tracts occupy residues 2708 to 2726 (GKGK…RRGR) and 2877 to 2895 (GKGK…RRGR).

Belongs to the NBPF family. Expressed in spleen and fetal liver.

The protein localises to the cytoplasm. The chain is NBPF family member NBPF14 from Homo sapiens (Human).